A 152-amino-acid chain; its full sequence is Phosphoribosyl-AMP cyclohydrolase (152 aa).

D92 serves as a coordination point for Mg(2+). C93 lines the Zn(2+) pocket. Mg(2+) is bound by residues D94 and D96. Positions 111 and 118 each coordinate Zn(2+).

This sequence belongs to the PRA-CH family. Homodimer. Mg(2+) is required as a cofactor. Zn(2+) serves as cofactor.

It is found in the cytoplasm. It carries out the reaction 1-(5-phospho-beta-D-ribosyl)-5'-AMP + H2O = 1-(5-phospho-beta-D-ribosyl)-5-[(5-phospho-beta-D-ribosylamino)methylideneamino]imidazole-4-carboxamide. Its pathway is amino-acid biosynthesis; L-histidine biosynthesis; L-histidine from 5-phospho-alpha-D-ribose 1-diphosphate: step 3/9. Its function is as follows. Catalyzes the hydrolysis of the adenine ring of phosphoribosyl-AMP. This is Phosphoribosyl-AMP cyclohydrolase from Sinorhizobium fredii (strain NBRC 101917 / NGR234).